Consider the following 184-residue polypeptide: GMP synthase [glutamine-hydrolyzing] subunit A (184 aa).

The 182-residue stretch at 3 to 184 (PICVVNNYGQ…YENFDAICTE (182 aa)) folds into the Glutamine amidotransferase type-1 domain. C75 acts as the Nucleophile in catalysis. Residues H162 and E164 contribute to the active site.

In terms of assembly, heterodimer composed of a glutamine amidotransferase subunit (A) and a GMP-binding subunit (B).

It catalyses the reaction XMP + L-glutamine + ATP + H2O = GMP + L-glutamate + AMP + diphosphate + 2 H(+). Its pathway is purine metabolism; GMP biosynthesis; GMP from XMP (L-Gln route): step 1/1. Catalyzes the synthesis of GMP from XMP. This is GMP synthase [glutamine-hydrolyzing] subunit A from Methanoregula boonei (strain DSM 21154 / JCM 14090 / 6A8).